The primary structure comprises 418 residues: Light-independent protochlorophyllide reductase subunit N (418 aa).

[4Fe-4S] cluster is bound by residues Cys17, Cys42, and Cys103.

The protein belongs to the BchN/ChlN family. Protochlorophyllide reductase is composed of three subunits; ChlL, ChlN and ChlB. Forms a heterotetramer of two ChlB and two ChlN subunits. It depends on [4Fe-4S] cluster as a cofactor.

It carries out the reaction chlorophyllide a + oxidized 2[4Fe-4S]-[ferredoxin] + 2 ADP + 2 phosphate = protochlorophyllide a + reduced 2[4Fe-4S]-[ferredoxin] + 2 ATP + 2 H2O. It participates in porphyrin-containing compound metabolism; chlorophyll biosynthesis (light-independent). In terms of biological role, component of the dark-operative protochlorophyllide reductase (DPOR) that uses Mg-ATP and reduced ferredoxin to reduce ring D of protochlorophyllide (Pchlide) to form chlorophyllide a (Chlide). This reaction is light-independent. The NB-protein (ChlN-ChlB) is the catalytic component of the complex. The protein is Light-independent protochlorophyllide reductase subunit N of Prochlorococcus marinus (strain NATL2A).